A 532-amino-acid chain; its full sequence is Putative 57 kDa heat shock protein (532 aa).

SHSP domains follow at residues 25 to 134 (VNGP…CKIT) and 439 to 532 (SVLE…IPSN).

It belongs to the small heat shock protein (HSP20) family.

This chain is Putative 57 kDa heat shock protein, found in Arabidopsis thaliana (Mouse-ear cress).